We begin with the raw amino-acid sequence, 608 residues long: DNA mismatch repair protein MutL (608 aa).

The protein belongs to the DNA mismatch repair MutL/HexB family.

Functionally, this protein is involved in the repair of mismatches in DNA. It is required for dam-dependent methyl-directed DNA mismatch repair. May act as a 'molecular matchmaker', a protein that promotes the formation of a stable complex between two or more DNA-binding proteins in an ATP-dependent manner without itself being part of a final effector complex. The chain is DNA mismatch repair protein MutL from Anoxybacillus flavithermus (strain DSM 21510 / WK1).